The following is a 208-amino-acid chain: Large ribosomal subunit protein bL25 (208 aa).

It belongs to the bacterial ribosomal protein bL25 family. CTC subfamily. In terms of assembly, part of the 50S ribosomal subunit; part of the 5S rRNA/L5/L18/L25 subcomplex. Contacts the 5S rRNA. Binds to the 5S rRNA independently of L5 and L18.

Functionally, this is one of the proteins that binds to the 5S RNA in the ribosome where it forms part of the central protuberance. This is Large ribosomal subunit protein bL25 from Acidovorax ebreus (strain TPSY) (Diaphorobacter sp. (strain TPSY)).